The primary structure comprises 313 residues: MSRNGRDACRELIGFFFTHDQSLTIYEYRQFGKNRTIVLPFIQKSIYSHQCGRRKGKQYRLGDFYVGATLTFLSSDHASLPESIKENTFLKLRITHIDQIALDSLKTASMDQEDDIVIQETNDRLVFKAIQDVLKEKLHKRGVRILTGLGKYFQQLDKEGNGLLDKADFKQALKVFHLEVSEKDFESAWLILDDNGNGKVDYGEFKRGIIGEMNEYRKSYVRKAFMKLDFNKTGSVPITNIRKCYCAKKHSQVISGHSTEEEIKSSFLETLKVACSKSDEVSYGEFEDYYEGLSIEIIDDEDFVTILRTPWGI.

EF-hand domains follow at residues 144 to 179 (RILT…FHLE), 180 to 215 (VSEK…EMNE), and 216 to 251 (YRKS…KKHS). Residues Asp-193, Asn-195, Asn-197, Lys-199, and Glu-204 each coordinate Ca(2+).

This is Calcyphosin-2 (CAPS2) from Macaca fascicularis (Crab-eating macaque).